Consider the following 493-residue polypeptide: MSELTALTIAEARDKLKAKAITATELTDAYLSAIDAANDAINAYVAVTHDQARSMAKASDERIAKGEAGALEGIPLGVKDLFATKGVHTQACSHILDGFKPEYESTVTANLWADGAVMLGKLNMDEFAMGSSNETSYYGPVKNPWRAKGSNADLVPGGSSGGSAAAVAAHLCAGATATDTGGSIRQPAAFTGTVGIKPTYGRVSRWGTVAFASSLDQAGPIARDVRDAAILMKSMASLDLKDTTSVDLPVPDYEAALGRSVKGMKIGIPREYRVDGMPGEIEELWQKGIQYLKDAGAEIVDISLPHTKYALPAYYIVAPAEASSNLARYDGVRYGLRVPGKDIADMYEQTRAAGFGKEVKRRIMIGTYVLSAGYYDAYYLRAQKVRTLIKKDFEDVFAKGVDAILTPATPSAAFGLADEVLANDPVKMYLNDIFTVTVNMAGLPGIAVPAGLNGQGLPLGLQLIGRPFEEETLFQAAHVIEQAAGRFTPAKWW.

Residues Lys79 and Ser159 each act as charge relay system in the active site. Catalysis depends on Ser183, which acts as the Acyl-ester intermediate.

Belongs to the amidase family. GatA subfamily. In terms of assembly, heterotrimer of A, B and C subunits.

The catalysed reaction is L-glutamyl-tRNA(Gln) + L-glutamine + ATP + H2O = L-glutaminyl-tRNA(Gln) + L-glutamate + ADP + phosphate + H(+). Functionally, allows the formation of correctly charged Gln-tRNA(Gln) through the transamidation of misacylated Glu-tRNA(Gln) in organisms which lack glutaminyl-tRNA synthetase. The reaction takes place in the presence of glutamine and ATP through an activated gamma-phospho-Glu-tRNA(Gln). In Brucella canis (strain ATCC 23365 / NCTC 10854 / RM-666), this protein is Glutamyl-tRNA(Gln) amidotransferase subunit A.